We begin with the raw amino-acid sequence, 110 residues long: Ribonuclease P protein component 1 (110 aa).

The protein belongs to the eukaryotic/archaeal RNase P protein component 1 family. As to quaternary structure, consists of a catalytic RNA component and at least 4-5 protein subunits.

It localises to the cytoplasm. The enzyme catalyses Endonucleolytic cleavage of RNA, removing 5'-extranucleotides from tRNA precursor.. Part of ribonuclease P, a protein complex that generates mature tRNA molecules by cleaving their 5'-ends. In Methanosarcina acetivorans (strain ATCC 35395 / DSM 2834 / JCM 12185 / C2A), this protein is Ribonuclease P protein component 1.